Reading from the N-terminus, the 495-residue chain is MGGDGWPSDGHILLLIVLTVLTPPSLALYRLWIHPLRSYPGPRWWAIWRGPYILSNIRGNLVRDLQRLHQQFGPVVRIAPNELSFIVPEAASPIYTSNPEFPKDPMHLPPFHNGTPGILAADHAHHRRYRRLLAFSFSDKGLRHERSLIERSIDLLITQLHENCGQGPLDLALWFNWATFDIIGDLAFGDSFGCLENVQTHPWIASIQGNVKLIPILNAFRRYRLDGLLRLLGSRKLLEQRRRNAQFTTDQVDRRLKNSSTPRGDIWDAVLAQKPDGEPPMTRDEMISNASAIVLAGSETSATLLSGCTWLLLKNPSHLHQLTSRIRSQFTHASEIDSQSVSRVEGLQAVLEESLRLYPPVPMQSNRIVPQAGAYIAGGWVPGGTSVGLQQFVACRSSSNFHRPDEFLPERWQGQGEFAHDRREVSQPFSIGPRNCIGRQLAYVEMRLILVKLLWHFDLRLDTTRMKDTDWLAEQGIWILWDKKPLWVTLEPRNE.

The chain crosses the membrane as a helical span at residues I12–W32. 2 N-linked (GlcNAc...) asparagine glycosylation sites follow: N258 and N289. Heme is bound at residue C436.

It belongs to the cytochrome P450 family. Requires heme as cofactor.

Its subcellular location is the membrane. The enzyme catalyses (1'S)-averantin + reduced [NADPH--hemoprotein reductase] + O2 = (1'S,5'R)-5'-hydroxyaverantin + oxidized [NADPH--hemoprotein reductase] + H2O. It catalyses the reaction (1'S)-averantin + reduced [NADPH--hemoprotein reductase] + O2 = (1'S,5'S)-5'-hydroxyaverantin + oxidized [NADPH--hemoprotein reductase] + H2O + H(+). Its pathway is mycotoxin biosynthesis; aflatoxin biosynthesis. Functionally, averantin hydroxylase; part of the gene cluster that mediates the biosynthesis of aflatoxins, a group of polyketide-derived furanocoumarins, and part of the most toxic and carcinogenic compounds among the known mycotoxins. The four major aflatoxins produced by A.parasiticus are aflatoxin B1 (AFB1), aflatoxin B2 (AFB2), aflatoxin G1 (AFG1) and aflatoxin G2 (AFG2). Within the aflatoxin pathway, the cytochrome P450 monooxygenase aflG catalyzes the hydroxylation of AVN to 5'hydroxyaverantin (HAVN). The biosynthesis of aflatoxins begins with the norsolorinic acid synthase aflC that combines a hexanoyl starter unit produced by the fatty acid synthase aflA/aflB and 7 malonyl-CoA extender units to synthesize the precursor NOR. The second step is the conversion of NOR to averantin and requires the norsolorinic acid ketoreductase aflD, which catalyzes the dehydration of norsolorinic acid to form (1'S)-averantin. The norsolorinic acid reductases aflE and aflF may also play a role in the conversion of NOR to AVN. The cytochrome P450 monooxygenase aflG then catalyzes the hydroxylation of AVN to 5'hydroxyaverantin (HAVN). The next step is performed by the 5'-hydroxyaverantin dehydrogenase aflH that transforms HAVN to 5'-oxoaverantin (OAVN) which is further converted to averufin (AVF) by aflK that plays a dual role in the pathway, as a 5'-oxoaverantin cyclase that mediates conversion of 5'-oxoaverantin, as well as a versicolorin B synthase in a later step in the pathway. The averufin oxidase aflI catalyzes the conversion of AVF to versiconal hemiacetal acetate (VHA). VHA is then the substrate for the versiconal hemiacetal acetate esterase aflJ to yield versiconal (VAL). Versicolorin B synthase aflK then converts VAL to versicolorin B (VERB) by closing the bisfuran ring of aflatoxin which is required for DNA-binding, thus giving to aflatoxin its activity as a mutagen. Then, the activity of the versicolorin B desaturase aflL leads to versicolorin A (VERA). A branch point starts from VERB since it can also be converted to dihydrodemethylsterigmatocystin (DMDHST), probably also by aflL, VERA being a precursor for aflatoxins B1 and G1, and DMDHST for aflatoxins B2 and G2. Next, the versicolorin reductase aflM and the cytochrome P450 monooxygenase aflN are involved in conversion of VERA to demethylsterigmatocystin (DMST). AflX and aflY seem also involved in this step, through probable aflX-mediated epoxide ring-opening step following versicolorin A oxidation and aflY-mediated Baeyer-Villiger oxidation required for the formation of the xanthone ring. The methyltransferase aflO then leads to the modification of DMST to sterigmatocystin (ST), and of DMDHST to dihydrosterigmatocystin (DHST). Both ST and DHST are then substrates of the O-methyltransferase aflP to yield O-methylsterigmatocystin (OMST) and dihydro-O-methylsterigmatocystin (DHOMST), respectively. Finally OMST is converted to aflatoxins B1 and G1, and DHOMST to aflatoxins B2 and G2, via the action of several enzymes including O-methylsterigmatocystin oxidoreductase aflQ, the cytochrome P450 monooxygenase aflU, but also the NADH-dependent flavin oxidoreductase nadA which is specifically required for the synthesis of AFG1. The sequence is that of Averantin hydroxylase from Aspergillus parasiticus (strain ATCC 56775 / NRRL 5862 / SRRC 143 / SU-1).